Consider the following 307-residue polypeptide: N-acetylmuramic acid 6-phosphate etherase (307 aa).

An SIS domain is found at 59–222 (TADRLRQGGR…STGVMVKLGK (164 aa)). Glutamate 87 functions as the Proton donor in the catalytic mechanism. Residue glutamate 118 is part of the active site.

Belongs to the GCKR-like family. MurNAc-6-P etherase subfamily. Homodimer.

It carries out the reaction N-acetyl-D-muramate 6-phosphate + H2O = N-acetyl-D-glucosamine 6-phosphate + (R)-lactate. It participates in amino-sugar metabolism; N-acetylmuramate degradation. Specifically catalyzes the cleavage of the D-lactyl ether substituent of MurNAc 6-phosphate, producing GlcNAc 6-phosphate and D-lactate. The polypeptide is N-acetylmuramic acid 6-phosphate etherase (Nostoc sp. (strain PCC 7120 / SAG 25.82 / UTEX 2576)).